We begin with the raw amino-acid sequence, 145 residues long: Small ribosomal subunit protein eS19 (145 aa).

K23 is subject to N6-acetyllysine. An Omega-N-methylarginine modification is found at R67. Residues K111 and K115 each carry the N6-acetyllysine modification. An N6-succinyllysine modification is found at K143.

It belongs to the eukaryotic ribosomal protein eS19 family. Component of the small ribosomal subunit. Part of the small subunit (SSU) processome, composed of more than 70 proteins and the RNA chaperone small nucleolar RNA (snoRNA) U3. Interacts with RPS19BP1; the interaction is direct and mediates the integration of RPS19 in state post-A1. Interacts with RPS19BP1.

The protein resides in the cytoplasm. It is found in the nucleus. It localises to the nucleolus. Its function is as follows. Component of the small ribosomal subunit. The ribosome is a large ribonucleoprotein complex responsible for the synthesis of proteins in the cell. Required for pre-rRNA processing and maturation of 40S ribosomal subunits. Part of the small subunit (SSU) processome, first precursor of the small eukaryotic ribosomal subunit. During the assembly of the SSU processome in the nucleolus, many ribosome biogenesis factors, an RNA chaperone and ribosomal proteins associate with the nascent pre-rRNA and work in concert to generate RNA folding, modifications, rearrangements and cleavage as well as targeted degradation of pre-ribosomal RNA by the RNA exosome. The sequence is that of Small ribosomal subunit protein eS19 (RPS19) from Oryctolagus cuniculus (Rabbit).